The primary structure comprises 1773 residues: Disco-interacting protein 2 (1773 aa).

The DMAP1-binding domain maps to 3-110; that stretch reads HTASLPGYVR…QRHSKKIDFH (108 aa). Residues Y60 and Y61 each carry the phosphotyrosine modification. 2 disordered regions span residues 112 to 185 and 198 to 319; these read QAAM…YHSE and LKGR…PLSS. 2 stretches are compositionally biased toward polar residues: residues 113–125 and 146–165; these read AAMS…QSGN and YQNT…NNSQ. The segment covering 166 to 175 has biased composition (basic residues); it reads HRQRRTQRKV. Over residues 176-185 the composition is skewed to basic and acidic residues; that stretch reads THNEKRYHSE. Acidic residues predominate over residues 224–236; that stretch reads DELDSSTDDESIP. Over residues 241 to 253 the composition is skewed to basic and acidic residues; that stretch reads SPDKEYNYPRDHI. The segment covering 272–297 has biased composition (polar residues); that stretch reads SMGSQQHARTDVKQNQITNQKYTAPN.

It belongs to the DIP2 family. As to quaternary structure, interacts with Disco. As to expression, expressed in the developing nervous system. Ubiquitously expressed in the developing brain. Within the mushroom body, a higher level is detected in the core of lobes and peduncle in the late third instar larva. Detected in whole mushroom body neuron structures at 48 hours after puparium formation and during later stages.

It is found in the cell membrane. Required for precise axonal bifurcation in mushroom body neurons by suppressing ectopic bifurcation and regulating the guidance of sister axons. May function by regulating expression of tdp1. Acts downstream of the serine/threonine-protein kinase Bsk to modulate the direction of axon projection. May play a role in fatty acid metabolism. The sequence is that of Disco-interacting protein 2 from Drosophila melanogaster (Fruit fly).